We begin with the raw amino-acid sequence, 212 residues long: Thiamine-phosphate synthase (212 aa).

4-amino-2-methyl-5-(diphosphooxymethyl)pyrimidine is bound by residues 35–39 (QLRRK) and Asn67. Residues Asp68 and Asp87 each contribute to the Mg(2+) site. A 4-amino-2-methyl-5-(diphosphooxymethyl)pyrimidine-binding site is contributed by Ser106. 132–134 (TGS) provides a ligand contact to 2-[(2R,5Z)-2-carboxy-4-methylthiazol-5(2H)-ylidene]ethyl phosphate. Residue Lys135 coordinates 4-amino-2-methyl-5-(diphosphooxymethyl)pyrimidine. Residues Gly163 and 183 to 184 (IS) each bind 2-[(2R,5Z)-2-carboxy-4-methylthiazol-5(2H)-ylidene]ethyl phosphate.

The protein belongs to the thiamine-phosphate synthase family. Requires Mg(2+) as cofactor.

It carries out the reaction 2-[(2R,5Z)-2-carboxy-4-methylthiazol-5(2H)-ylidene]ethyl phosphate + 4-amino-2-methyl-5-(diphosphooxymethyl)pyrimidine + 2 H(+) = thiamine phosphate + CO2 + diphosphate. It catalyses the reaction 2-(2-carboxy-4-methylthiazol-5-yl)ethyl phosphate + 4-amino-2-methyl-5-(diphosphooxymethyl)pyrimidine + 2 H(+) = thiamine phosphate + CO2 + diphosphate. The catalysed reaction is 4-methyl-5-(2-phosphooxyethyl)-thiazole + 4-amino-2-methyl-5-(diphosphooxymethyl)pyrimidine + H(+) = thiamine phosphate + diphosphate. The protein operates within cofactor biosynthesis; thiamine diphosphate biosynthesis; thiamine phosphate from 4-amino-2-methyl-5-diphosphomethylpyrimidine and 4-methyl-5-(2-phosphoethyl)-thiazole: step 1/1. In terms of biological role, condenses 4-methyl-5-(beta-hydroxyethyl)thiazole monophosphate (THZ-P) and 2-methyl-4-amino-5-hydroxymethyl pyrimidine pyrophosphate (HMP-PP) to form thiamine monophosphate (TMP). This is Thiamine-phosphate synthase from Chlorobium luteolum (strain DSM 273 / BCRC 81028 / 2530) (Pelodictyon luteolum).